The following is a 522-amino-acid chain: 2-isopropylmalate synthase (522 aa).

Residues 5 to 267 (VIIFDTTLRD…ETGINAKEIH (263 aa)) enclose the Pyruvate carboxyltransferase domain. Residues aspartate 14, histidine 202, histidine 204, and asparagine 238 each contribute to the Mn(2+) site. Residues 392-522 (QLQQLVVQSD…MQKNRELGGV (131 aa)) form a regulatory domain region.

Belongs to the alpha-IPM synthase/homocitrate synthase family. LeuA type 1 subfamily. In terms of assembly, homodimer. It depends on Mn(2+) as a cofactor.

It is found in the cytoplasm. The catalysed reaction is 3-methyl-2-oxobutanoate + acetyl-CoA + H2O = (2S)-2-isopropylmalate + CoA + H(+). The protein operates within amino-acid biosynthesis; L-leucine biosynthesis; L-leucine from 3-methyl-2-oxobutanoate: step 1/4. Catalyzes the condensation of the acetyl group of acetyl-CoA with 3-methyl-2-oxobutanoate (2-ketoisovalerate) to form 3-carboxy-3-hydroxy-4-methylpentanoate (2-isopropylmalate). The sequence is that of 2-isopropylmalate synthase from Shewanella putrefaciens (strain CN-32 / ATCC BAA-453).